We begin with the raw amino-acid sequence, 266 residues long: Glucosamine-6-phosphate deaminase (266 aa).

The active-site Proton acceptor; for enolization step is the Asp-72. The For ring-opening step role is filled by Asp-141. Residue His-143 is the Proton acceptor; for ring-opening step of the active site. The For ring-opening step role is filled by Glu-148.

This sequence belongs to the glucosamine/galactosamine-6-phosphate isomerase family. NagB subfamily. As to quaternary structure, homohexamer.

It catalyses the reaction alpha-D-glucosamine 6-phosphate + H2O = beta-D-fructose 6-phosphate + NH4(+). Its pathway is amino-sugar metabolism; N-acetylneuraminate degradation; D-fructose 6-phosphate from N-acetylneuraminate: step 5/5. Its activity is regulated as follows. Allosterically activated by N-acetylglucosamine 6-phosphate (GlcNAc6P). In terms of biological role, catalyzes the reversible isomerization-deamination of glucosamine 6-phosphate (GlcN6P) to form fructose 6-phosphate (Fru6P) and ammonium ion. The chain is Glucosamine-6-phosphate deaminase from Citrobacter koseri (strain ATCC BAA-895 / CDC 4225-83 / SGSC4696).